A 757-amino-acid polypeptide reads, in one-letter code: 5-methyltetrahydropteroyltriglutamate--homocysteine methyltransferase (757 aa).

Residues 16–19 and lysine 112 each bind 5-methyltetrahydropteroyltri-L-glutamate; that span reads RELK. L-homocysteine is bound by residues 432–434 and glutamate 485; that span reads IGS. Residues 432–434 and glutamate 485 contribute to the L-methionine site; that span reads IGS. Residues 516–517 and tryptophan 562 each bind 5-methyltetrahydropteroyltri-L-glutamate; that span reads RC. Aspartate 600 lines the L-homocysteine pocket. Residue aspartate 600 participates in L-methionine binding. Residue glutamate 606 coordinates 5-methyltetrahydropteroyltri-L-glutamate. Residues histidine 642, cysteine 644, and glutamate 666 each coordinate Zn(2+). The active-site Proton donor is histidine 695. Cysteine 727 is a Zn(2+) binding site.

It belongs to the vitamin-B12 independent methionine synthase family. It depends on Zn(2+) as a cofactor.

It catalyses the reaction 5-methyltetrahydropteroyltri-L-glutamate + L-homocysteine = tetrahydropteroyltri-L-glutamate + L-methionine. Its pathway is amino-acid biosynthesis; L-methionine biosynthesis via de novo pathway; L-methionine from L-homocysteine (MetE route): step 1/1. In terms of biological role, catalyzes the transfer of a methyl group from 5-methyltetrahydrofolate to homocysteine resulting in methionine formation. The protein is 5-methyltetrahydropteroyltriglutamate--homocysteine methyltransferase of Actinobacillus pleuropneumoniae serotype 7 (strain AP76).